The sequence spans 132 residues: Large ribosomal subunit protein uL14 (132 aa).

Belongs to the universal ribosomal protein uL14 family. Part of the 50S ribosomal subunit. Forms a cluster with proteins L3 and L24e, part of which may contact the 16S rRNA in 2 intersubunit bridges.

Binds to 23S rRNA. Forms part of two intersubunit bridges in the 70S ribosome. This chain is Large ribosomal subunit protein uL14, found in Picrophilus torridus (strain ATCC 700027 / DSM 9790 / JCM 10055 / NBRC 100828 / KAW 2/3).